A 547-amino-acid polypeptide reads, in one-letter code: Chaperonin GroEL (547 aa).

Residues threonine 29–proline 32, aspartate 86–threonine 90, glycine 413, asparagine 479–alanine 481, and aspartate 495 each bind ATP.

This sequence belongs to the chaperonin (HSP60) family. Forms a cylinder of 14 subunits composed of two heptameric rings stacked back-to-back. Interacts with the co-chaperonin GroES.

The protein localises to the cytoplasm. The catalysed reaction is ATP + H2O + a folded polypeptide = ADP + phosphate + an unfolded polypeptide.. Functionally, together with its co-chaperonin GroES, plays an essential role in assisting protein folding. The GroEL-GroES system forms a nano-cage that allows encapsulation of the non-native substrate proteins and provides a physical environment optimized to promote and accelerate protein folding. The chain is Chaperonin GroEL from Synechococcus sp. (strain RCC307).